The chain runs to 298 residues: MDLSALETEGRNTRTTELDRLTVPELLAVMNDEDRTVASAVRDVLDQIGAAVELITESLRRGGRLIYLGAGTSGRIGLLDAVECPPTFGTTPDQVVGLLSGGPGAFVTAVEGAEDQPERAADDLDAIGVSADDTVVGLAASGRTPYVVGGLQHARGAGAATVSIACNRDALVSRYADVAIEVLTGPEVLTGSTRLKAGTAEKMVCNMLSTASMVRLGKVYGNLMVDVRATNGKLVDRVRRIVVESTGAEPETAEQALAAADGHAKTAIVMLAAGCSADEAARRIERAGGDIRTAIGAG.

Residues 55 to 218 form the SIS domain; that stretch reads ITESLRRGGR…STASMVRLGK (164 aa). E83 serves as the catalytic Proton donor. E114 is an active-site residue.

Belongs to the GCKR-like family. MurNAc-6-P etherase subfamily. Homodimer.

The catalysed reaction is N-acetyl-D-muramate 6-phosphate + H2O = N-acetyl-D-glucosamine 6-phosphate + (R)-lactate. It functions in the pathway amino-sugar metabolism; N-acetylmuramate degradation. Specifically catalyzes the cleavage of the D-lactyl ether substituent of MurNAc 6-phosphate, producing GlcNAc 6-phosphate and D-lactate. This is N-acetylmuramic acid 6-phosphate etherase from Mycolicibacterium smegmatis (strain ATCC 700084 / mc(2)155) (Mycobacterium smegmatis).